The following is a 117-amino-acid chain: Hainantoxin-XV-3 (117 aa).

An N-terminal signal peptide occupies residues 1–20 (MKLCAVIIASLLVCVAVASS). Residues 20 to 55 (SSDNQKEFAQEKEMTREETQSLGEHEKDDEVTGSEE) are disordered. A propeptide spanning residues 21–56 (SDNQKEFAQEKEMTREETQSLGEHEKDDEVTGSEER) is cleaved from the precursor. Over residues 23–55 (NQKEFAQEKEMTREETQSLGEHEKDDEVTGSEE) the composition is skewed to basic and acidic residues. Cystine bridges form between Cys-58–Cys-72, Cys-65–Cys-78, Cys-69–Cys-115, and Cys-71–Cys-91.

Belongs to the neurotoxin 03 (Tx2) family. 02 subfamily. HNTX-XV sub-subfamily. In terms of tissue distribution, expressed by the venom gland.

It is found in the secreted. In terms of biological role, putative ion channel inhibitor. This chain is Hainantoxin-XV-3, found in Cyriopagopus hainanus (Chinese bird spider).